Reading from the N-terminus, the 144-residue chain is MGRFIFVSFGLLVVFLSLSGTAADCLSGWSSYEGHCYKPFNELKNWADAENFCTQQQAGGHLVSFQSSEEADFVVKLAFQTFDHSIFWMGLSNVWNQCNWQWSNAAMLRYKAWAEESYCVYFKSTNNKWRSRSCRMMANFVCEF.

An N-terminal signal peptide occupies residues 1–23; that stretch reads MGRFIFVSFGLLVVFLSLSGTAA. 3 cysteine pairs are disulfide-bonded: C25–C36, C53–C142, and C119–C134. In terms of domain architecture, C-type lectin spans 32–143; the sequence is YEGHCYKPFN…CRMMANFVCE (112 aa).

It belongs to the snaclec family. As to quaternary structure, heterodimer of subunits A and B1; disulfide-linked. In terms of tissue distribution, expressed by the venom gland.

Its subcellular location is the secreted. In terms of biological role, anticoagulant protein which binds to the gamma-carboxyglutamic acid-domain regions of factors IX (F9) and factor X (F10) in the presence of calcium with a 1 to 1 stoichiometry. This is Snaclec coagulation factor IX/factor X-binding protein subunit B1 from Trimeresurus stejnegeri (Chinese green tree viper).